A 518-amino-acid chain; its full sequence is Pumilio homolog 14 (518 aa).

Disordered stretches follow at residues 26–46 and 77–114; these read TMASSSSQPQPISSPFHQPEN and VGQNGDSIHLPRRTNQVFTGSSSGGAGDDNGYLLPPMG. Residues 29 to 44 are compositionally biased toward low complexity; the sequence is SSSSQPQPISSPFHQP. Residues 178 to 518 form the PUM-HD domain; that stretch reads YTNRFGYEGY…GNKVLEKLNI (341 aa). Residues 206 to 235 form a Pumilio 1; degenerate repeat; it reads SAFAKDKEMSERLGMSIFQGTKETVDAIYN. Pumilio repeat units follow at residues 236 to 271, 275 to 313, 314 to 348, 349 to 387, 388 to 423, 424 to 459, and 460 to 494; these read GLIGDICELMVDPYGSDVVQLLMRRCSSEQIVQLVD, QQMFQFVNICIDSLGTNAIQVLLTCINERAKDQIPRIVD, VVRTVALQLSKSNHAIFVILACFRLFPLHCRLLLE, LIVQNCHQIAIDQHGCCLLQLCFNKDRVPNLEIRQRLIM, EAIANALRLCLNCYGNYVVQYIVELNNRYLIDALVR, QLIGNYAHLARNKYGSHAVQKLLKLRWIDSRVIVID, and LLREIDTLLLDPFGNYVIQTAWFVSKDDVRRMLRY.

Its subcellular location is the cytoplasm. The protein resides in the nucleus. Its function is as follows. Sequence-specific RNA-binding protein that regulates translation and mRNA stability by binding the 3'-UTR of target mRNAs. The chain is Pumilio homolog 14 (APUM14) from Arabidopsis thaliana (Mouse-ear cress).